We begin with the raw amino-acid sequence, 444 residues long: Protein kinase C and casein kinase substrate in neurons protein 1 (444 aa).

Phosphoserine occurs at positions 2 and 79. The F-BAR domain occupies 13 to 283; the sequence is EETTDSFWEV…AIRGADAQED (271 aa). Residues 26–275 are a coiled coil; that stretch reads KRTVKRIDDG…HVYRELEQAI (250 aa). Disordered regions lie at residues 173–194 and 309–386; these read REMN…LQDK and LPHT…DDSK. Thr184 is modified (phosphothreonine). Residues 314 to 324 are compositionally biased toward basic and acidic residues; it reads TKKEKQPKKAE. A compositionally biased stretch (polar residues) spans 329–351; that stretch reads TNATGAVESTSQAGDRGSVSSYD. Ser346, Ser348, Ser349, Ser361, and Ser365 each carry phosphoserine. Positions 385–444 constitute an SH3 domain; the sequence is SKGVRVRALYDYDGQEQDELSFKAGDELTKLGEEDEQGWCRGRLDSGQLGLYPANYVEAI. A Phosphotyrosine modification is found at Tyr394. Residues Ser405 and Ser430 each carry the phosphoserine modification.

It belongs to the PACSIN family. As to quaternary structure, homodimer. May form heterooligomers with other PACSINs. Interacts with both COBL and DBNL. Identified in a complex composed of COBL, PACSIN1 and WASL. Interacts (via SH3 domain) with SYNJ1 and WASL. Interacts (via SH3 domain) with DNM1; the interaction is reduced by DNM1 phosphorylation. Interacts with DNM2 and DNM3. Interacts with MAPT. Interacts with EHD1 and EHD3. Interacts with TRPV4. Post-translationally, phosphorylated by casein kinase 2 (CK2) and protein kinase C (PKC).

It is found in the cytoplasm. It localises to the cell projection. Its subcellular location is the synapse. The protein resides in the synaptosome. The protein localises to the ruffle membrane. It is found in the membrane. It localises to the cytoplasmic vesicle membrane. Its subcellular location is the cytosol. The protein resides in the cell membrane. In terms of biological role, binds to membranes via its F-BAR domain and mediates membrane tubulation. Plays a role in the reorganization of the microtubule cytoskeleton via its interaction with MAPT; this decreases microtubule stability and inhibits MAPT-induced microtubule polymerization. Plays a role in cellular transport processes by recruiting DNM1, DNM2 and DNM3 to membranes. Plays a role in the reorganization of the actin cytoskeleton and in neuron morphogenesis via its interaction with COBL and WASL, and by recruiting COBL to the cell cortex. Plays a role in the regulation of neurite formation, neurite branching and the regulation of neurite length. Required for normal synaptic vesicle endocytosis; this process retrieves previously released neurotransmitters to accommodate multiple cycles of neurotransmission. Required for normal excitatory and inhibitory synaptic transmission. This chain is Protein kinase C and casein kinase substrate in neurons protein 1 (Pacsin1), found in Pongo abelii (Sumatran orangutan).